Consider the following 419-residue polypeptide: MPQLDSGGGGAGRGDDLGAPDELLAFQDEGEEQDDKNRDSPVGPERDLAELKSSLVNESEGAAAGAGVPGPGVRVHGEAEGAPEALGREHTSQRLFPDKLPESLEDGLKAPECTSGMYKETVYSAFNLLMPYPPASGAGQHPQPQPPLHNKPGQPPHGVPQLSPLYEHFSSPHPTPAPADISQKQGVHRPLQTPDLSGFYSLTSGSMGQLPHTVSWPSPPLYPLSPSCGYRQHFPAPTAAPGAPYPRFTHPSLMLGSGVPGHPAAIPHPAIVPSSGKQELQPYDRNLKTQAEPKAEKEAKKPVIKKPLNAFMLYMKEMRAKVIAECTLKESAAINQILGRRWHALSREEQAKYYELARKERQLHMQLYPGWSARDNYGKKKRRSREKHQESTTGGKRNAFGTYPEKAAAPAPFLPMTVL.

The span at 1–12 (MPQLDSGGGGAG) shows a compositional bias: gly residues. Residues 1 to 60 (MPQLDSGGGGAGRGDDLGAPDELLAFQDEGEEQDDKNRDSPVGPERDLAELKSSLVNESE) form a CTNNB1-binding region. Disordered stretches follow at residues 1–111 (MPQL…LKAP) and 134–200 (PASG…SGFY). Composition is skewed to basic and acidic residues over residues 35–50 (DKNR…DLAE) and 86–109 (LGRE…DGLK). Over residues 143 to 158 (QPQPPLHNKPGQPPHG) the composition is skewed to pro residues. The HMG box DNA-binding region spans 304–372 (IKKPLNAFML…LHMQLYPGWS (69 aa)). Positions 374–406 (RDNYGKKKRRSREKHQESTTGGKRNAFGTYPEK) are disordered. Positions 379–385 (KKKRRSR) match the Nuclear localization signal motif.

The protein belongs to the TCF/LEF family. Binds the armadillo repeat of CTNNB1 and forms a stable complex. Binds TLE5, TLE1, TLE2, TLE3 and TLE4. Interacts with MLLT11. Interacts with DAZAP2. As to quaternary structure, interacts (via N-terminus) with SOX13; inhibits WNT-mediated transcriptional activity. In terms of tissue distribution, T-cell specific. Expressed in triple negative 2 subpopulations of T-cells and both the gamma-delta and alpha-beta T-cell lineages. Expressed in Il7 receptor positive innate-like T-cells in the mesenteric lymph nodes and spleen (at protein level).

It localises to the nucleus. In terms of biological role, transcriptional activator involved in T-cell lymphocyte differentiation. Necessary for the survival of CD4(+) CD8(+) immature thymocytes. Isoforms lacking the N-terminal CTNNB1 binding domain cannot fulfill this role. Binds to the T-lymphocyte-specific enhancer element (5'-WWCAAAG-3') found in the promoter of the CD3E gene. Represses expression of the T-cell receptor gamma gene in alpha-beta T-cell lineages. Inhibits the developmental program of IL17A effector gamma-delta T-cell subsets via regulating the transcription of T-cell lineage effector proteins. Required for the development of natural killer receptor-positive lymphoid tissue inducer T-cells. TLE1, TLE2, TLE3 and TLE4 repress transactivation mediated by TCF7 and CTNNB1. May also act as feedback transcriptional repressor of CTNNB1 and TCF7L2 target genes. The sequence is that of Transcription factor 7 from Mus musculus (Mouse).